We begin with the raw amino-acid sequence, 182 residues long: Sperm acrosome-associated protein 7 (182 aa).

Positions 1–24 (MAANRGSRTFLSVFLLCCWQGAEL) are cleaved as a signal peptide. N-linked (GlcNAc...) asparagine glycosylation is present at Asn40. Positions 112–140 (LPTKEESGKNDRSTVANLHDHSSQTKHEP) are enriched in basic and acidic residues. The interval 112–154 (LPTKEESGKNDRSTVANLHDHSSQTKHEPPSSPEGKGSSNDDV) is disordered.

As to expression, testis-specific. Expressed in zygotene and pachytene spermatocytes, round spermatids, elongating spermatids and spermatozoa (at protein level). Testis-specific.

The protein resides in the secreted. Its subcellular location is the cytoplasmic vesicle. The protein localises to the secretory vesicle. It is found in the acrosome lumen. Functionally, involved in fertilization. Seems not to play a direct role in sperm-egg binding or gamete fusion. The sequence is that of Sperm acrosome-associated protein 7 from Mus musculus (Mouse).